The sequence spans 362 residues: UDP-N-acetylglucosamine--N-acetylmuramyl-(pentapeptide) pyrophosphoryl-undecaprenol N-acetylglucosamine transferase (362 aa).

Residues 21 to 23 (TGG), Asn-129, Arg-170, Ser-198, and Gln-290 each bind UDP-N-acetyl-alpha-D-glucosamine.

Belongs to the glycosyltransferase 28 family. MurG subfamily.

The protein localises to the cell inner membrane. The enzyme catalyses di-trans,octa-cis-undecaprenyl diphospho-N-acetyl-alpha-D-muramoyl-L-alanyl-D-glutamyl-meso-2,6-diaminopimeloyl-D-alanyl-D-alanine + UDP-N-acetyl-alpha-D-glucosamine = di-trans,octa-cis-undecaprenyl diphospho-[N-acetyl-alpha-D-glucosaminyl-(1-&gt;4)]-N-acetyl-alpha-D-muramoyl-L-alanyl-D-glutamyl-meso-2,6-diaminopimeloyl-D-alanyl-D-alanine + UDP + H(+). Its pathway is cell wall biogenesis; peptidoglycan biosynthesis. Cell wall formation. Catalyzes the transfer of a GlcNAc subunit on undecaprenyl-pyrophosphoryl-MurNAc-pentapeptide (lipid intermediate I) to form undecaprenyl-pyrophosphoryl-MurNAc-(pentapeptide)GlcNAc (lipid intermediate II). The polypeptide is UDP-N-acetylglucosamine--N-acetylmuramyl-(pentapeptide) pyrophosphoryl-undecaprenol N-acetylglucosamine transferase (Synechococcus sp. (strain JA-3-3Ab) (Cyanobacteria bacterium Yellowstone A-Prime)).